A 207-amino-acid polypeptide reads, in one-letter code: Holliday junction branch migration complex subunit RuvA (207 aa).

Residues 1–64 (MIGRLRGNLL…EDAQLLYGFN (64 aa)) form a domain I region. The tract at residues 65–143 (TKNERALFRE…GWGAGDLFTP (79 aa)) is domain II. The segment at 144–158 (ATDAAPMDDGSEFIT) is flexible linker. The domain III stretch occupies residues 159 to 207 (SPQSAVDEAVSALIALGYKPQQASKTVSQVAKPDMTSEVLIRESLKSMI).

Belongs to the RuvA family. In terms of assembly, homotetramer. Forms an RuvA(8)-RuvB(12)-Holliday junction (HJ) complex. HJ DNA is sandwiched between 2 RuvA tetramers; dsDNA enters through RuvA and exits via RuvB. An RuvB hexamer assembles on each DNA strand where it exits the tetramer. Each RuvB hexamer is contacted by two RuvA subunits (via domain III) on 2 adjacent RuvB subunits; this complex drives branch migration. In the full resolvosome a probable DNA-RuvA(4)-RuvB(12)-RuvC(2) complex forms which resolves the HJ.

The protein localises to the cytoplasm. Its function is as follows. The RuvA-RuvB-RuvC complex processes Holliday junction (HJ) DNA during genetic recombination and DNA repair, while the RuvA-RuvB complex plays an important role in the rescue of blocked DNA replication forks via replication fork reversal (RFR). RuvA specifically binds to HJ cruciform DNA, conferring on it an open structure. The RuvB hexamer acts as an ATP-dependent pump, pulling dsDNA into and through the RuvAB complex. HJ branch migration allows RuvC to scan DNA until it finds its consensus sequence, where it cleaves and resolves the cruciform DNA. The protein is Holliday junction branch migration complex subunit RuvA of Aliivibrio fischeri (strain MJ11) (Vibrio fischeri).